A 221-amino-acid chain; its full sequence is Late protein I196L (221 aa).

3 tandem repeats follow at residues 28 to 48 (SNYL…PTTS), 49 to 69 (SNYS…PTTS), and 70 to 90 (SNYS…PTTS). The 4; approximate repeat unit spans residues 91–112 (SNYSMTAIPNNISDKEDYTYFS).

It belongs to the asfivirus I196L family.

This chain is Late protein I196L, found in African swine fever virus (isolate Tick/Malawi/Lil 20-1/1983) (ASFV).